Here is a 427-residue protein sequence, read N- to C-terminus: 11-beta-hydroxysteroid dehydrogenase type 2 (427 aa).

82-111 (TRAVLITGCDSGFGNATAKKLDAMGFTVLA) is a binding site for NAD(+). S219 contacts substrate. Residue Y232 is the Proton acceptor of the active site.

Belongs to the short-chain dehydrogenases/reductases (SDR) family. Interacts with ligand-free cytoplasmic NR3C2. Highly expressed in the kidney and adrenal and at lower levels in the colon.

The protein resides in the microsome. It is found in the endoplasmic reticulum. The enzyme catalyses an 11beta-hydroxysteroid + NAD(+) = an 11-oxosteroid + NADH + H(+). It catalyses the reaction corticosterone + NAD(+) = 11-dehydrocorticosterone + NADH + H(+). It carries out the reaction cortisol + NAD(+) = cortisone + NADH + H(+). The catalysed reaction is 11beta,17beta-dihydroxyandrost-4-ene-3-one + NAD(+) = 17beta-hydroxyandrost-4-ene-3,11-dione + NADH + H(+). The enzyme catalyses 11beta-hydroxyandrost-4-ene-3,17-dione + NAD(+) = androst-4-ene-3,11,17-trione + NADH + H(+). It functions in the pathway steroid metabolism. With respect to regulation, inhibited by glycyrrhetinic acid, carbenoloxone, 11-alpha-OH-progesterone and 11-beta-OH-progesterone. Catalyzes the conversion of biologically active 11beta-hydroxyglucocorticoids (11beta-hydroxysteroid) such as cortisol, to inactive 11-ketoglucocorticoids (11-oxosteroid) such as cortisone, in the presence of NAD(+). Functions as a dehydrogenase (oxidase), thereby decreasing the concentration of active glucocorticoids, thus protecting the nonselective mineralocorticoid receptor from occupation by glucocorticoids. Plays an important role in maintaining glucocorticoids balance during preimplantation and protects the fetus from excessive maternal corticosterone exposure. Catalyzes the oxidation of 11beta-hydroxytestosterone (11beta,17beta-dihydroxyandrost-4-ene-3-one) to 11-ketotestosterone (17beta-hydroxyandrost-4-ene-3,11-dione), a major bioactive androgen. Catalyzes the conversion of 11beta-hydroxyandrostenedione (11beta-hydroxyandrost-4-ene-3,17-dione) to 11-ketoandrostenedione (androst-4-ene-3,11,17-trione), which can be further metabolized to 11-ketotestosterone. Converts 7-beta-25-dihydroxycholesterol to 7-oxo-25-hydroxycholesterol in vitro. 7-beta-25-dihydroxycholesterol (not 7-oxo-25-hydroxycholesterol) acts as a ligand for the G-protein-coupled receptor (GPCR) Epstein-Barr virus-induced gene 2 (EBI2) and may thereby regulate immune cell migration. May protect ovulating oocytes and fertilizing spermatozoa from the adverse effects of cortisol. This Ovis aries (Sheep) protein is 11-beta-hydroxysteroid dehydrogenase type 2 (HSD11B2).